A 1943-amino-acid chain; its full sequence is MSPLLRSICDITEIFNQYVSHDCDGAALTKKDLKNLLEREFGAVLRRPHDPKTVDLILELLDLDSNGRVDFNEFLLFIFKVAQACYYALGQATGLDEEKRARCDGKESLLQDRRQEEDQRRFEPRDRQLEEEPGQRRRQKRQEQERELAEGEEQSEKQERLEQRDRQRRDEELWRQRQEWQEREERRAEEEQLQSCKGHETEEFPDEEQLRRRELLELRRKGREEKQQQRRERQDRVFQEEEEKEWRKRETVLRKEEEKLQEEEPQRQRELQEEEEQLRKLERQELRRERQEEEQQQQRLRREQQLRRKQEEERREQQEERREQQERREQQEERREQQLRREQEERREQQLRREQEEERREQQLRREQEEERREQQLRREQQLRREQQLRREQQLRREQQLRREQQLRREQQLRREQQLRREQQLRREQEEERHEQKHEQERREQRLKREQEERRDWLKREEETERHEQERRKQQLKRDQEEERRERWLKLEEEERREQQERREQQLRREQEERREQRLKRQEEEERLQQRLRSEQQLRREQEERREQLLKREEEKRLEQERREQRLKREQEERRDQLLKREEERRQQRLKREQEERLEQRLKREEVERLEQEERREQRLKREEPEEERRQQLLKSEEQEERRQQQLRREQQERREQRLKREEEEERLEQRLKREHEEERREQELAEEEQEQARERIKSRIPKWQWQLESEADARQSKVYSRPRKQEGQRRRQEQEEKRRRRESELQWQEEERAHRQQQEEEQRRDFTWQWQAEEKSERGRQRLSARPPLREQRERQLRAEERQQREQRFLPEEEEKEQRRRQRREREKELQFLEEEEQLQRRERAQQLQEEEDGLQEDQERRRSQEQRRDQKWRWQLEEERKRRRHTLYAKPALQEQLRKEQQLLQEEEEELQREEREKRRRQEQERQYREEEQLQQEEEQLLREEREKRRRQERERQYRKDKKLQQKEEQLLGEEPEKRRRQEREKKYREEEELQQEEEQLLREEREKRRRQEWERQYRKKDELQQEEEQLLREEREKRRLQERERQYREEEELQQEEEQLLGEERETRRRQELERQYRKEEELQQEEEQLLREEPEKRRRQERERQCREEEELQQEEEQLLREEREKRRRQELERQYREEEEVQQEEEQLLREEPEKRRRQELERQYREEEELQQEEEQLLREEQEKRRQERERQYREEEELQRQKRKQRYRDEDQRSDLKWQWEPEKENAVRDNKVYCKGRENEQFRQLEDSQLRDRQSQQDLQHLLGEQQERDREQERRRWQQRDRHFPEEEQLEREEQKEAKRRDRKSQEEKQLLREEREEKRRRQETDRKFREEEQLLQEREEQPLRRQERDRKFREEELRHQEQGRKFLEEEQRLRRQERERKFLKEEQQLRCQEREQQLRQDRDRKFREEEQQLSRQERDRKFREEEQQVRRQERERKFLEEEQQLRQERHRKFREEEQLLQEREEQQLHRQERDRKFLEEEQQLRRQERDRKFREQELRSQEPERKFLEEEQQLHRQQRQRKFLQEEQQLRRQERGQQRRQDRDRKFREEEQLRQEREEQQLSRQERDRKFRLEEQKVRRQEQERKFMEDEQQLRRQEGQQQLRQERDRKFREDEQLLQEREEQQLHRQERDRKFLEEEPQLRRQEREQQLRHDRDRKFREEEQLLQEGEEQQLRRQERDRKFREEEQQLRRQERERKFLQEEQQLRRQELERKFREEEQLRQETEQEQLRRQERYRKILEEEQLRPEREEQQLRRQERDRKFREEEQLRQEREEQQLRSQESDRKFREEEQLRQEREEQQLRPQQRDGKYRWEEEQLQLEEQEQRLRQERDRQYRAEEQFATQEKSRREEQELWQEEEQKRRQERERKLREEHIRRQQKEEQRHRQVGEIKSQEGKGHGRLLEPGTHQFASVPVRSSPLYEYIQEQRSQYRP.

Positions 1–91 are S-100-like; that stretch reads MSPLLRSICD…AQACYYALGQ (91 aa). 2 EF-hand domains span residues 23 to 48 and 49 to 84; these read CDGA…LRRP and HDPK…VAQA. 6 residues coordinate Ca(2+): D32, D62, D64, N66, R68, and E73. Disordered regions lie at residues 110–164, 186–209, and 222–274; these read LQDR…LEQR, RRAE…DEEQ, and GREE…LQEE. A compositionally biased stretch (basic and acidic residues) spans 197–209; sequence KGHETEEFPDEEQ. The 1-1; approximate repeat unit spans residues 314–326; it reads RREQQEERREQQE. Positions 314 to 377 are 5 X 13 AA tandem repeats of R-R-E-Q-E-E-E-R-R-E-Q-Q-L; sequence RREQQEERRE…QEEERREQQL (64 aa). The 1-2; approximate repeat unit spans residues 327–339; sequence RREQQEERREQQL. The stretch at 340 to 351 is one 1-3; approximate repeat; sequence RREQEERREQQL. Tandem repeats lie at residues 352-364, 365-377, 378-383, 384-389, 390-395, 396-401, 402-407, 408-413, 414-419, and 420-425. Residues 378–425 are 8 X 6 AA tandem repeats of R-R-E-Q-Q-L; it reads RREQQLRREQQLRREQQLRREQQLRREQQLRREQQLRREQQLRREQQL. The interval 425 to 683 is 9 X 28 AA approximate tandem repeats; sequence LRREQEEERH…REHEEERREQ (259 aa). 4 disordered regions span residues 426-485, 509-546, 608-819, and 837-872; these read RREQ…EERR, REQE…EERR, ERLE…EKEQ, and EEQL…RRDQ. 4 stretches are compositionally biased toward basic and acidic residues: residues 608–684, 724–781, 789–812, and 859–872; these read ERLE…REQE, RKQE…ERGR, PLRE…RFLP, and DQER…RRDQ. A run of 10 repeats spans residues 906-935, 936-965, 966-995, 996-1025, 1026-1055, 1056-1085, 1086-1115, 1116-1145, 1146-1175, and 1176-1204. The segment at 906–1204 is 10 X 30 AA tandem repeats; sequence LQEEEEELQR…RERQYREEEE (299 aa). Positions 950–992 are enriched in basic and acidic residues; sequence KRRRQERERQYRKDKKLQQKEEQLLGEEPEKRRRQEREKKYRE. Disordered regions lie at residues 950 to 1000, 1046 to 1120, 1137 to 1162, 1193 to 1371, 1404 to 1435, 1492 to 1691, 1757 to 1820, 1834 to 1864, and 1876 to 1928; these read KRRR…QQEE, RERQ…QQEE, ERQY…EKRR, QERE…RHQE, REQQ…FREE, QQLR…ERDR, PERE…RDGK, EQRL…EQEL, and RERK…VRSS. Over residues 1052-1064 the composition is skewed to acidic residues; sequence EEEELQQEEEQLL. 2 stretches are compositionally biased toward basic and acidic residues: residues 1065-1085 and 1092-1111; these read GEER…KEEE and QLLR…RQCR. The span at 1142 to 1151 shows a compositional bias: acidic residues; that stretch reads EEEEVQQEEE. Positions 1152 to 1162 are enriched in basic and acidic residues; it reads QLLREEPEKRR. 2 stretches are compositionally biased toward basic and acidic residues: residues 1214 to 1263 and 1274 to 1371; these read YRDE…DRQS and QQER…RHQE. The 23 X 26 AA approximate tandem repeats stretch occupies residues 1292–1894; that stretch reads HFPEEEQLER…IRRQQKEEQR (603 aa). 3 stretches are compositionally biased toward basic and acidic residues: residues 1492-1524, 1533-1673, and 1682-1691; these read QQLR…EQQL, FLQE…REEE, and QQLRRQERDR. Positions 1876-1912 are enriched in basic and acidic residues; sequence RERKLREEHIRRQQKEEQRHRQVGEIKSQEGKGHGRL.

Belongs to the S100-fused protein family. In terms of assembly, monomer. Substrate of transglutaminase. Some 200 arginines are probably converted to citrullines by peptidylarginine deimidase. In terms of tissue distribution, found in the hard keratinizing tissues such as the inner root sheath (IRS) of hair follicles and medulla, and in the filiform papillae of dorsal tongue epithelium.

Intermediate filament-associated protein that associates in regular arrays with keratin intermediate filaments (KIF) of the inner root sheath cells of the hair follicle and the granular layer of the epidermis. It later becomes cross-linked to KIF by isodipeptide bonds. It may serve as scaffold protein, together with involucrin, in the organization of the cell envelope or even anchor the cell envelope to the KIF network. It may be involved in its own calcium-dependent postsynthetic processing during terminal differentiation. This Homo sapiens (Human) protein is Trichohyalin (TCHH).